Reading from the N-terminus, the 172-residue chain is Caltractin (172 aa).

The interval M1 to Q23 is disordered. A compositionally biased stretch (polar residues) spans T12–K21. EF-hand domains follow at residues E29 to E64, P65 to E99, D101 to N136, and M137 to F172. Ca(2+) contacts are provided by D42, D44, S46, K48, and E53.

The protein belongs to the centrin family. As to quaternary structure, monomer.

It is found in the cytoplasm. It localises to the cytoskeleton. The protein resides in the microtubule organizing center. The protein localises to the centrosome. Plays a fundamental role in microtubule-organizing center structure and function. The sequence is that of Caltractin (CTN) from Naegleria gruberi (Amoeba).